We begin with the raw amino-acid sequence, 629 residues long: Interleukin-23 receptor (629 aa).

The signal sequence occupies residues 1-23 (MNQVTIQWDAVIALYILFSWCHG). Residues 24–355 (GITNINCSGH…LTSDNRGDIG (332 aa)) lie on the Extracellular side of the membrane. Residue Asn29 is glycosylated (N-linked (GlcNAc...) asparagine; partial). Residues Asn47, Asn81, and Asn141 are each glycosylated (N-linked (GlcNAc...) asparagine). 2 Fibronectin type-III domains span residues 127 to 217 (IPDE…LDDI) and 219 to 318 (IPSA…TPET). Residue Asn180 is glycosylated (N-linked (GlcNAc...) (high mannose) asparagine). N-linked (GlcNAc...) asparagine glycosylation is found at Asn232 and Asn262. Asn273 carries an N-linked (GlcNAc...) asparagine; partial glycan. The chain crosses the membrane as a helical span at residues 356–376 (LLLGMIVFAVMLSILSLIGIF). The Cytoplasmic portion of the chain corresponds to 377-629 (NRSFRTGIKR…HFNRISLLEK (253 aa)).

The protein belongs to the type I cytokine receptor family. Type 2 subfamily. As to quaternary structure, heterodimer with IL12RB1. In presence of IL23, the heterodimer forms the IL23 receptor. Interacts with JAK2 and in presence of IL23 with STAT3. Post-translationally, phosphorylated in response to IL23. Expressed by monocytes, Th1, Th0, NK and dendritic cells. Isoform 1 is specifically expressed in NK cells.

The protein localises to the cell membrane. In terms of biological role, associates with IL12RB1 to form the interleukin-23 receptor. Binds IL23 and mediates T-cells, NK cells and possibly certain macrophage/myeloid cells stimulation probably through activation of the Jak-Stat signaling cascade. IL23 functions in innate and adaptive immunity and may participate in acute response to infection in peripheral tissues. IL23 may be responsible for autoimmune inflammatory diseases and be important for tumorigenesis. The sequence is that of Interleukin-23 receptor (IL23R) from Homo sapiens (Human).